A 1099-amino-acid chain; its full sequence is Carbamoyl phosphate synthase large chain (1099 aa).

The interval 1 to 402 (MPKREDIKRI…ALGKALRSLE (402 aa)) is carboxyphosphate synthetic domain. ATP is bound by residues R129, R169, G175, G176, E208, V210, E215, G241, I242, H243, Q285, and E299. The region spanning 133-328 (KETMEKAGLE…IAKVAALLAV (196 aa)) is the ATP-grasp 1 domain. Mg(2+) is bound by residues Q285, E299, and N301. Residues Q285, E299, and N301 each contribute to the Mn(2+) site. Residues 403–541 (LDAAPKLDLE…STYNGVENEA (139 aa)) form an oligomerization domain region. Residues 542 to 944 (VPSDREKIMI…AFAKAQIAAG (403 aa)) are carbamoyl phosphate synthetic domain. Positions 666–857 (AKLLKQIGLK…VARIAAKIMV (192 aa)) constitute an ATP-grasp 2 domain. 10 residues coordinate ATP: R702, K741, L743, E748, G773, V774, H775, S776, Q816, and E828. The Mg(2+) site is built by Q816, E828, and N830. Mn(2+) contacts are provided by Q816, E828, and N830. The 155-residue stretch at 945–1099 (NPLPTTGAIL…VRRLTDTWKM (155 aa)) folds into the MGS-like domain. The interval 945–1099 (NPLPTTGAIL…VRRLTDTWKM (155 aa)) is allosteric domain.

The protein belongs to the CarB family. Composed of two chains; the small (or glutamine) chain promotes the hydrolysis of glutamine to ammonia, which is used by the large (or ammonia) chain to synthesize carbamoyl phosphate. Tetramer of heterodimers (alpha,beta)4. It depends on Mg(2+) as a cofactor. The cofactor is Mn(2+).

The enzyme catalyses hydrogencarbonate + L-glutamine + 2 ATP + H2O = carbamoyl phosphate + L-glutamate + 2 ADP + phosphate + 2 H(+). It catalyses the reaction hydrogencarbonate + NH4(+) + 2 ATP = carbamoyl phosphate + 2 ADP + phosphate + 2 H(+). Its pathway is amino-acid biosynthesis; L-arginine biosynthesis; carbamoyl phosphate from bicarbonate: step 1/1. It participates in pyrimidine metabolism; UMP biosynthesis via de novo pathway; (S)-dihydroorotate from bicarbonate: step 1/3. Functionally, large subunit of the glutamine-dependent carbamoyl phosphate synthetase (CPSase). CPSase catalyzes the formation of carbamoyl phosphate from the ammonia moiety of glutamine, carbonate, and phosphate donated by ATP, constituting the first step of 2 biosynthetic pathways, one leading to arginine and/or urea and the other to pyrimidine nucleotides. The large subunit (synthetase) binds the substrates ammonia (free or transferred from glutamine from the small subunit), hydrogencarbonate and ATP and carries out an ATP-coupled ligase reaction, activating hydrogencarbonate by forming carboxy phosphate which reacts with ammonia to form carbamoyl phosphate. The protein is Carbamoyl phosphate synthase large chain of Thermotoga maritima (strain ATCC 43589 / DSM 3109 / JCM 10099 / NBRC 100826 / MSB8).